A 306-amino-acid polypeptide reads, in one-letter code: Porphobilinogen deaminase (306 aa).

Cys239 bears the S-(dipyrrolylmethanemethyl)cysteine mark.

It belongs to the HMBS family. Monomer. Requires dipyrromethane as cofactor.

The catalysed reaction is 4 porphobilinogen + H2O = hydroxymethylbilane + 4 NH4(+). Its pathway is porphyrin-containing compound metabolism; protoporphyrin-IX biosynthesis; coproporphyrinogen-III from 5-aminolevulinate: step 2/4. Its function is as follows. Tetrapolymerization of the monopyrrole PBG into the hydroxymethylbilane pre-uroporphyrinogen in several discrete steps. In Helicobacter pylori (strain Shi470), this protein is Porphobilinogen deaminase.